Consider the following 293-residue polypeptide: 4-hydroxy-tetrahydrodipicolinate synthase (293 aa).

Thr-47 is a binding site for pyruvate. Residue Tyr-135 is the Proton donor/acceptor of the active site. Lys-163 serves as the catalytic Schiff-base intermediate with substrate. Val-205 is a binding site for pyruvate.

It belongs to the DapA family. Homotetramer; dimer of dimers.

It is found in the cytoplasm. It carries out the reaction L-aspartate 4-semialdehyde + pyruvate = (2S,4S)-4-hydroxy-2,3,4,5-tetrahydrodipicolinate + H2O + H(+). Its pathway is amino-acid biosynthesis; L-lysine biosynthesis via DAP pathway; (S)-tetrahydrodipicolinate from L-aspartate: step 3/4. Catalyzes the condensation of (S)-aspartate-beta-semialdehyde [(S)-ASA] and pyruvate to 4-hydroxy-tetrahydrodipicolinate (HTPA). This chain is 4-hydroxy-tetrahydrodipicolinate synthase, found in Leptothrix cholodnii (strain ATCC 51168 / LMG 8142 / SP-6) (Leptothrix discophora (strain SP-6)).